Here is a 467-residue protein sequence, read N- to C-terminus: Asparagine--tRNA ligase (467 aa).

Belongs to the class-II aminoacyl-tRNA synthetase family. Homodimer.

The protein resides in the cytoplasm. It catalyses the reaction tRNA(Asn) + L-asparagine + ATP = L-asparaginyl-tRNA(Asn) + AMP + diphosphate + H(+). This is Asparagine--tRNA ligase from Bacteroides fragilis (strain YCH46).